Here is a 467-residue protein sequence, read N- to C-terminus: Neutrophil collagenase (467 aa).

The signal sequence occupies residues M1 to A20. Positions F21–M100 are cleaved as a propeptide — activation peptide. Residues N54 and N73 are each glycosylated (N-linked (GlcNAc...) asparagine). A Cysteine switch motif is present at residues P89 to S96. C91 contributes to the Zn(2+) binding site. A glycan (N-linked (GlcNAc...) asparagine) is linked at N112. Ca(2+) is bound at residue D157. H167 and D169 together coordinate Zn(2+). Ca(2+) is bound by residues D174, G175, N177, and I179. Position 182 (H182) interacts with Zn(2+). Residues G189, G191, and D193 each coordinate Ca(2+). Residue H195 coordinates Zn(2+). D197 and E200 together coordinate Ca(2+). N204 carries N-linked (GlcNAc...) asparagine glycosylation. Zn(2+) is bound at residue H217. The active site involves E218. Zn(2+)-binding residues include H221 and H227. N-linked (GlcNAc...) asparagine glycosylation is present at N246. Hemopexin repeat units follow at residues P276–L325, P326–S372, V374–I420, and E421–C464. C279 and C464 are oxidised to a cystine. A Ca(2+)-binding site is contributed by D286. Ca(2+) is bound by residues D378 and D425.

Belongs to the peptidase M10A family. Ca(2+) serves as cofactor. The cofactor is Zn(2+). As to expression, neutrophils.

It localises to the cytoplasmic granule. The protein resides in the secreted. Its subcellular location is the extracellular space. The protein localises to the extracellular matrix. The catalysed reaction is Cleavage of interstitial collagens in the triple helical domain. Unlike EC 3.4.24.7, this enzyme cleaves type III collagen more slowly than type I.. With respect to regulation, cannot be activated without removal of the activation peptide. Its function is as follows. Can degrade fibrillar type I, II, and III collagens. This chain is Neutrophil collagenase (MMP8), found in Homo sapiens (Human).